The chain runs to 274 residues: Protein A11 homolog (274 aa).

Positions 106 to 136 (DDNKRVHLLEQEIAELRKKKTKSKNLLDFTN) form a coiled coil.

The protein belongs to the poxviridae A11 family. As to quaternary structure, homomultimer. Interacts with A32. In terms of processing, phosphorylated by a F10-independent mechanism.

The protein localises to the host cytoplasm. In terms of biological role, required for viral crescent formation early during virus morphogenesis. The chain is Protein A11 homolog from Fowlpox virus (strain NVSL) (FPV).